A 212-amino-acid polypeptide reads, in one-letter code: Calaxin (212 aa).

3 consecutive EF-hand domains span residues 65–100, 101–136, and 146–181; these read TDDM…FLRG, TLEE…SLLK, and GIKD…ETLL. Residues D78, D80, D82, C84, E89, D114, N116, D118, E125, D159, D161, D163, K165, and D170 each coordinate Ca(2+).

Component of the outer dynein arm-docking complex along with ODAD1, ODAD2, ODAD3 and ODAD4. As to expression, expressed in trachea multiciliated cells.

It is found in the cytoplasm. It localises to the cytoskeleton. Its subcellular location is the cilium axoneme. The protein resides in the cell projection. The protein localises to the cilium. It is found in the flagellum. Component of the outer dynein arm-docking complex (ODA-DC) that mediates outer dynein arms (ODA) binding onto the doublet microtubule. Seems to regulate the assembly of both ODAs and their axonemal docking complex onto ciliary microtubules. Regulates ciliary and flagellar motility and is required for cilia-driven determination of body laterality. This chain is Calaxin (CLXN), found in Bos taurus (Bovine).